The following is a 132-amino-acid chain: Small ribosomal subunit protein uS8 (132 aa).

This sequence belongs to the universal ribosomal protein uS8 family. As to quaternary structure, part of the 30S ribosomal subunit. Contacts proteins S5 and S12.

Its function is as follows. One of the primary rRNA binding proteins, it binds directly to 16S rRNA central domain where it helps coordinate assembly of the platform of the 30S subunit. In Streptococcus pneumoniae serotype 19F (strain G54), this protein is Small ribosomal subunit protein uS8.